The sequence spans 903 residues: Chitin synthase 1 (903 aa).

The disordered stretch occupies residues 1–154 (MDPRYGAQPQ…YQDQPQQGGG (154 aa)). The span at 67–79 (DHLNLNAAQSVDN) shows a compositional bias: polar residues. Asn79 carries N-linked (GlcNAc...) asparagine glycosylation. Over residues 100-117 (YYNQPYEPRPQQQPYDQG) the composition is skewed to low complexity. Polar residues predominate over residues 135–150 (HQPSDAPSEPYQDQPQ). 9 helical membrane-spanning segments follow: residues 444–464 (SAFG…YVAL), 543–563 (RWLN…LDFL), 573–593 (FAFF…WFAI), 619–639 (ILGV…FVLS), 654–674 (MCWF…FIAV), 700–720 (MLII…LIML), 729–749 (LVQY…YAFC), 828–848 (GVVL…LSSA), and 875–895 (IVLW…MWFL).

It belongs to the chitin synthase family. Class I subfamily.

The protein resides in the cell membrane. It catalyses the reaction [(1-&gt;4)-N-acetyl-beta-D-glucosaminyl](n) + UDP-N-acetyl-alpha-D-glucosamine = [(1-&gt;4)-N-acetyl-beta-D-glucosaminyl](n+1) + UDP + H(+). In terms of biological role, polymerizes chitin, a structural polymer of the cell wall and septum, by transferring the sugar moiety of UDP-GlcNAc to the non-reducing end of the growing chitin polymer. Plays an important role in nuclear sorting or distribution. The sequence is that of Chitin synthase 1 from Fusarium oxysporum f. sp. lycopersici (strain 4287 / CBS 123668 / FGSC 9935 / NRRL 34936) (Fusarium vascular wilt of tomato).